A 61-amino-acid polypeptide reads, in one-letter code: Large ribosomal subunit protein bL28 (61 aa).

The tract at residues 1–26 (MAKDYVTGKRTHFGNTRSHALNHSRR) is disordered.

Belongs to the bacterial ribosomal protein bL28 family.

This is Large ribosomal subunit protein bL28 from Lactiplantibacillus plantarum (strain ATCC BAA-793 / NCIMB 8826 / WCFS1) (Lactobacillus plantarum).